The sequence spans 350 residues: Eukaryotic translation initiation factor 3 subunit I (350 aa).

WD repeat units follow at residues 8–49 (GHER…GTLE), 51–89 (HQGV…CVFT), 91–135 (ESPS…ESLT), 149–188 (QDGA…AVNS), 198–240 (EKNV…KVYK), and 296–335 (GHFG…FDFY).

It belongs to the eIF-3 subunit I family. Component of the eukaryotic translation initiation factor 3 (eIF-3) complex.

The protein localises to the cytoplasm. Component of the eukaryotic translation initiation factor 3 (eIF-3) complex, which is involved in protein synthesis of a specialized repertoire of mRNAs and, together with other initiation factors, stimulates binding of mRNA and methionyl-tRNAi to the 40S ribosome. The eIF-3 complex specifically targets and initiates translation of a subset of mRNAs involved in cell proliferation. This chain is Eukaryotic translation initiation factor 3 subunit I, found in Scheffersomyces stipitis (strain ATCC 58785 / CBS 6054 / NBRC 10063 / NRRL Y-11545) (Yeast).